A 274-amino-acid chain; its full sequence is 2,3,4,5-tetrahydropyridine-2,6-dicarboxylate N-succinyltransferase (274 aa).

Substrate contacts are provided by Arg103 and Asp140.

It belongs to the transferase hexapeptide repeat family. Homotrimer.

It is found in the cytoplasm. The catalysed reaction is (S)-2,3,4,5-tetrahydrodipicolinate + succinyl-CoA + H2O = (S)-2-succinylamino-6-oxoheptanedioate + CoA. The protein operates within amino-acid biosynthesis; L-lysine biosynthesis via DAP pathway; LL-2,6-diaminopimelate from (S)-tetrahydrodipicolinate (succinylase route): step 1/3. The polypeptide is 2,3,4,5-tetrahydropyridine-2,6-dicarboxylate N-succinyltransferase (Pasteurella multocida (strain Pm70)).